The following is a 421-amino-acid chain: UDP-N-acetylglucosamine 1-carboxyvinyltransferase (421 aa).

22–23 (KN) is a binding site for phosphoenolpyruvate. Arg93 contacts UDP-N-acetyl-alpha-D-glucosamine. The active-site Proton donor is Cys117. A 2-(S-cysteinyl)pyruvic acid O-phosphothioketal modification is found at Cys117. UDP-N-acetyl-alpha-D-glucosamine is bound by residues 122-126 (RPVDL), Asp308, and Ile330.

Belongs to the EPSP synthase family. MurA subfamily.

The protein resides in the cytoplasm. It catalyses the reaction phosphoenolpyruvate + UDP-N-acetyl-alpha-D-glucosamine = UDP-N-acetyl-3-O-(1-carboxyvinyl)-alpha-D-glucosamine + phosphate. It functions in the pathway cell wall biogenesis; peptidoglycan biosynthesis. Cell wall formation. Adds enolpyruvyl to UDP-N-acetylglucosamine. This is UDP-N-acetylglucosamine 1-carboxyvinyltransferase from Pseudomonas entomophila (strain L48).